The chain runs to 362 residues: Poly(rC)-binding protein 2 (362 aa).

2 consecutive KH domains span residues 13–75 and 97–162; these read TLTI…FAMI and PVTL…VKQI. Residue lysine 115 forms a Glycyl lysine isopeptide (Lys-Gly) (interchain with G-Cter in SUMO2) linkage. Serine 169 is modified (phosphoserine). A Glycyl lysine isopeptide (Lys-Gly) (interchain with G-Cter in SUMO2) cross-link involves residue lysine 181. A phosphoserine mark is found at serine 185 and serine 268. One can recognise a KH 3 domain in the interval 284–348; it reads TTSHELTIPN…ASISLAQYLI (65 aa). Lysine 319 is covalently cross-linked (Glycyl lysine isopeptide (Lys-Gly) (interchain with G-Cter in SUMO2)). 2 positions are modified to phosphoserine: serine 361 and serine 362.

As to quaternary structure, identified in a mRNP complex, at least composed of DHX9, DDX3X, ELAVL1, HNRNPU, IGF2BP1, ILF3, PABPC1, PCBP2, PTBP2, STAU1, STAU2, SYNCRIP and YBX1. Interacts with IFIH1 and RNF135. Interacts with MAVS (via C-terminus) and ITCH (via WW domains). Interacts with CGAS; preventing the formation of liquid-like droplets in which CGAS is activated. In terms of processing, phosphorylated. The non-phosphorylated form(s) exhibited the strongest poly(rC)-binding activity.

Its subcellular location is the nucleus. It localises to the cytoplasm. Single-stranded nucleic acid binding protein that binds preferentially to oligo dC. Major cellular poly(rC)-binding protein. Also binds poly(rU). Acts as a negative regulator of antiviral signaling. Negatively regulates cellular antiviral responses mediated by MAVS signaling. It acts as an adapter between MAVS and the E3 ubiquitin ligase ITCH, therefore triggering MAVS ubiquitination and degradation. Negativeley regulates the cGAS-STING pathway via interaction with CGAS, preventing the formation of liquid-like droplets in which CGAS is activated. Together with PCBP1, required for erythropoiesis, possibly by regulating mRNA splicing. The protein is Poly(rC)-binding protein 2 (Pcbp2) of Mus musculus (Mouse).